Consider the following 466-residue polypeptide: Glutamate--tRNA ligase 2 (466 aa).

The 'HIGH' region signature appears at 9-19; the sequence is PSPTGSLHLGG. Residues 236 to 240 carry the 'KMSKS' region motif; that stretch reads KLSKR. Lys239 serves as a coordination point for ATP.

The protein belongs to the class-I aminoacyl-tRNA synthetase family. Glutamate--tRNA ligase type 1 subfamily. Monomer.

Its subcellular location is the cytoplasm. It carries out the reaction tRNA(Glu) + L-glutamate + ATP = L-glutamyl-tRNA(Glu) + AMP + diphosphate. Its function is as follows. Catalyzes the attachment of glutamate to tRNA(Glu) in a two-step reaction: glutamate is first activated by ATP to form Glu-AMP and then transferred to the acceptor end of tRNA(Glu). The protein is Glutamate--tRNA ligase 2 of Anaplasma marginale (strain St. Maries).